We begin with the raw amino-acid sequence, 302 residues long: MKTLLILTILAMATTIATANMQVDPSGQVQWPQQQPFPQPQQPFCQQPQRTIPQPHQTFHHQPQQTFPQPQQTYPHQPQQQFPQTQQPQQPFPQPQQTFPQQPQLPFPQQPQQPFPQPQQPQQPFPQSQQPQQPFPQPQQQFPQPQQPQQSFPQQQQPAIQSFLQQQMNPCKNFLLQQCNHVSLVSSLVSIILPRSDCQVMQQQCCQQLAQIPQQLQCAAIHSVAHSIIMQQEQQQGVPILRPLFQLAQGLGIIQPQQPAQLEGIRSLVLKTLPTMCNVYVPPDCSTINVPYANIDAGIGGQ.

Residues 1 to 19 (MKTLLILTILAMATTIATA) form the signal peptide. A disordered region spans residues 27 to 159 (GQVQWPQQQP…QSFPQQQQPA (133 aa)). Low complexity predominate over residues 42-102 (QPFCQQPQRT…PQPQQTFPQQ (61 aa)). Pro residues predominate over residues 103 to 124 (PQLPFPQQPQQPFPQPQQPQQP). Positions 125–159 (FPQSQQPQQPFPQPQQQFPQPQQPQQSFPQQQQPA) are enriched in low complexity.

It belongs to the gliadin/glutenin family.

In terms of biological role, gliadin is the major seed storage protein in wheat. This Triticum aestivum (Wheat) protein is Gamma-gliadin.